Reading from the N-terminus, the 226-residue chain is 6-deoxy-6-sulfo-D-fructose transaldolase (226 aa).

The active-site Schiff-base intermediate with substrate is the Lys89.

It belongs to the transaldolase family.

It carries out the reaction 6-deoxy-6-sulfo-D-fructose + D-glyceraldehyde 3-phosphate = D-fructose 6-phosphate + (2S)-3-sulfolactaldehyde. The enzyme catalyses 6-deoxy-6-sulfo-D-fructose + D-erythrose 4-phosphate = (2S)-3-sulfolactaldehyde + D-sedoheptulose 7-phosphate. In terms of biological role, part of the sulfo-TAL (or sulfo-SFT) pathway, a D-sulfoquinovose degradation pathway that produces sulfolactate (SL). Catalyzes the conversion of 6-deoxy-6-sulfo-D-fructose (SF) and glyceraldehyde 3-phosphate (GAP) into fructose-6-phosphate (F6P) and 3-sulfolactaldehyde (SLA). Can also catalyze the SF-cleavage with erythrose 4-phosphate (E4P) as acceptor, forming 3-sulfolactaldehyde (SLA) and sedoheptulose 7-phosphate (S7P). The chain is 6-deoxy-6-sulfo-D-fructose transaldolase from Priestia aryabhattai (Bacillus aryabhattai).